Reading from the N-terminus, the 76-residue chain is Endothelin-1 (76 aa).

The interval 30 to 44 (CQCASQKDKKCWNFC) is endothelin-like.

The protein belongs to the endothelin/sarafotoxin family.

Its subcellular location is the secreted. In terms of biological role, endothelins are endothelium-derived vasoconstrictor peptides. Probable ligand for G-protein coupled receptors EDNRA and EDNRB which activates PTK2B, BCAR1, BCAR3 and, GTPases RAP1 and RHOA cascade in glomerular mesangial cells. Also binds the DEAR/FBXW7-AS1 receptor. Promotes mesenteric arterial wall remodeling via activation of ROCK signaling and subsequent colocalization of NFATC3 with F-actin filaments. NFATC3 then translocates to the nucleus where it subsequently promotes the transcription of the smooth muscle hypertrophy and differentiation marker ACTA2. This Macaca fascicularis (Crab-eating macaque) protein is Endothelin-1 (EDN1).